The chain runs to 380 residues: Dual-specificity RNA methyltransferase RlmN (380 aa).

The Proton acceptor role is filled by Glu94. Residues 100 to 339 form the Radical SAM core domain; it reads DGDRATLCVS…VTVRKTRGDD (240 aa). Cysteines 107 and 344 form a disulfide. [4Fe-4S] cluster is bound by residues Cys114, Cys118, and Cys121. S-adenosyl-L-methionine-binding positions include 168–169, Ser200, 222–224, and Asn301; these read GE and SLH. The active-site S-methylcysteine intermediate is Cys344.

This sequence belongs to the radical SAM superfamily. RlmN family. [4Fe-4S] cluster serves as cofactor.

The protein localises to the cytoplasm. The enzyme catalyses adenosine(2503) in 23S rRNA + 2 reduced [2Fe-2S]-[ferredoxin] + 2 S-adenosyl-L-methionine = 2-methyladenosine(2503) in 23S rRNA + 5'-deoxyadenosine + L-methionine + 2 oxidized [2Fe-2S]-[ferredoxin] + S-adenosyl-L-homocysteine. It catalyses the reaction adenosine(37) in tRNA + 2 reduced [2Fe-2S]-[ferredoxin] + 2 S-adenosyl-L-methionine = 2-methyladenosine(37) in tRNA + 5'-deoxyadenosine + L-methionine + 2 oxidized [2Fe-2S]-[ferredoxin] + S-adenosyl-L-homocysteine. Specifically methylates position 2 of adenine 2503 in 23S rRNA and position 2 of adenine 37 in tRNAs. m2A2503 modification seems to play a crucial role in the proofreading step occurring at the peptidyl transferase center and thus would serve to optimize ribosomal fidelity. In Vibrio atlanticus (strain LGP32) (Vibrio splendidus (strain Mel32)), this protein is Dual-specificity RNA methyltransferase RlmN.